The primary structure comprises 310 residues: Ribosomal RNA small subunit methyltransferase H (310 aa).

Residues 33–35 (AGH), Asp53, Phe79, Asp100, and Gln107 each bind S-adenosyl-L-methionine.

It belongs to the methyltransferase superfamily. RsmH family.

Its subcellular location is the cytoplasm. It carries out the reaction cytidine(1402) in 16S rRNA + S-adenosyl-L-methionine = N(4)-methylcytidine(1402) in 16S rRNA + S-adenosyl-L-homocysteine + H(+). Specifically methylates the N4 position of cytidine in position 1402 (C1402) of 16S rRNA. This Clostridium perfringens (strain 13 / Type A) protein is Ribosomal RNA small subunit methyltransferase H.